The following is a 592-amino-acid chain: Frizzled-9 (592 aa).

Residues 1–23 form the signal peptide; it reads MAVPPLLRGALLLWQLLATGGAA. The Extracellular segment spans residues 24–230; it reads LEIGRFDPER…EVFWSRRDKD (207 aa). Residues 35 to 156 enclose the FZ domain; that stretch reads RGPAPCQAME…NDPHALCMEA (122 aa). Intrachain disulfides connect cysteine 40-cysteine 101, cysteine 48-cysteine 94, cysteine 85-cysteine 123, cysteine 112-cysteine 153, and cysteine 116-cysteine 140. Residues 59–173 form a required for Wnt-activated receptor activity region; sequence PNLLGHTSQG…PTEPHKGLGM (115 aa). A helical transmembrane segment spans residues 231 to 251; that stretch reads FALVWMAVWSALCFFSTAFTV. Residues 252–267 are Cytoplasmic-facing; it reads FTFLLEPHRFQYPERP. The helical transmembrane segment at 268 to 288 threads the bilayer; that stretch reads IIFLSMCYNVYSLAFLIRAVA. Over 289-314 the chain is Extracellular; it reads GAQSVACDQEAGALYVIQEGLENTGC. The chain crosses the membrane as a helical span at residues 315–335; that stretch reads TLVFLLLYYFGMASSLWWVVL. The Cytoplasmic segment spans residues 336–356; the sequence is TLTWFLAAGKKWGHEAIEAHG. Residues 357–377 traverse the membrane as a helical segment; that stretch reads SYFHMAAWGLPALKTIVVLTL. Residues 378–401 are Extracellular-facing; that stretch reads RKVAGDELTGLCYVASMDPAALTG. Residues 402 to 422 form a helical membrane-spanning segment; it reads FVLVPLSCYLVLGTSFLLTGF. Topologically, residues 423 to 448 are cytoplasmic; sequence VALFHIRKIMKTGGTNTEKLEKLMVK. Residues 449–469 traverse the membrane as a helical segment; sequence IGVFSILYTVPATCVIVCYVY. Residues 470–509 are Extracellular-facing; the sequence is ERLNMDFWRLRATEQPCTAAAVPGGRRDCSLPGGSVPTVA. The helical transmembrane segment at 510–530 threads the bilayer; sequence VFMLKIFMSLVVGITSGVWVW. Residues 531–592 lie on the Cytoplasmic side of the membrane; sequence SSKTFQTWQS…DPSLENPTHL (62 aa). The short motif at 533 to 538 is the Lys-Thr-X-X-X-Trp motif, mediates interaction with the PDZ domain of Dvl family members element; that stretch reads KTFQTW. Residues 555 to 592 form a required for CTNNB1 accumulation and TCF transcription factor activity region; it reads ACRTPGGYGRGTHCHYKAPTVVLHMTKTDPSLENPTHL.

This sequence belongs to the G-protein coupled receptor Fz/Smo family. Ubiquitinated by ZNRF3, leading to its degradation by the proteasome.

Its subcellular location is the cell membrane. In terms of biological role, receptor for WNT2 that is coupled to the beta-catenin canonical signaling pathway, which leads to the activation of disheveled proteins, inhibition of GSK-3 kinase, nuclear accumulation of beta-catenin and activation of Wnt target genes. Plays a role in neuromuscular junction (NMJ) assembly by negatively regulating the clustering of acetylcholine receptors (AChR) through the beta-catenin canonical signaling pathway. May play a role in neural progenitor cells (NPCs) viability through the beta-catenin canonical signaling pathway by negatively regulating cell cycle arrest leading to inhibition of neuron apoptotic process. During hippocampal development, regulates neuroblast proliferation and apoptotic cell death. Controls bone formation through non canonical Wnt signaling mediated via ISG15. Positively regulates bone regeneration through non canonical Wnt signaling. The polypeptide is Frizzled-9 (Rattus norvegicus (Rat)).